The following is a 343-amino-acid chain: Ketol-acid reductoisomerase (NADP(+)) (343 aa).

The 180-residue stretch at Thr-7–Thr-186 folds into the KARI N-terminal Rossmann domain. Residues Tyr-30–Gln-33, Arg-53, Ser-56, Ser-58, and Asp-88–Gln-91 each bind NADP(+). His-112 is a catalytic residue. Residue Gly-138 participates in NADP(+) binding. In terms of domain architecture, KARI C-terminal knotted spans Ser-187–Gly-329. Positions 195, 199, 231, and 235 each coordinate Mg(2+). Residue Ser-256 participates in substrate binding.

This sequence belongs to the ketol-acid reductoisomerase family. Requires Mg(2+) as cofactor.

It catalyses the reaction (2R)-2,3-dihydroxy-3-methylbutanoate + NADP(+) = (2S)-2-acetolactate + NADPH + H(+). The catalysed reaction is (2R,3R)-2,3-dihydroxy-3-methylpentanoate + NADP(+) = (S)-2-ethyl-2-hydroxy-3-oxobutanoate + NADPH + H(+). It functions in the pathway amino-acid biosynthesis; L-isoleucine biosynthesis; L-isoleucine from 2-oxobutanoate: step 2/4. The protein operates within amino-acid biosynthesis; L-valine biosynthesis; L-valine from pyruvate: step 2/4. Its function is as follows. Involved in the biosynthesis of branched-chain amino acids (BCAA). Catalyzes an alkyl-migration followed by a ketol-acid reduction of (S)-2-acetolactate (S2AL) to yield (R)-2,3-dihydroxy-isovalerate. In the isomerase reaction, S2AL is rearranged via a Mg-dependent methyl migration to produce 3-hydroxy-3-methyl-2-ketobutyrate (HMKB). In the reductase reaction, this 2-ketoacid undergoes a metal-dependent reduction by NADPH to yield (R)-2,3-dihydroxy-isovalerate. The chain is Ketol-acid reductoisomerase (NADP(+)) from Haloarcula marismortui (strain ATCC 43049 / DSM 3752 / JCM 8966 / VKM B-1809) (Halobacterium marismortui).